Here is a 205-residue protein sequence, read N- to C-terminus: Dr1-associated corepressor (205 aa).

Positions 14 to 77 constitute a Histone-fold domain; the sequence is PARIKKIMQT…SHLKQCIELE (64 aa). Positions 91-205 are disordered; sequence PDMQGDGEDN…DAEDEEDYDS (115 aa). The segment covering 98–108 has biased composition (basic and acidic residues); it reads EDNHVDGDKGP. The segment covering 138–155 has biased composition (acidic residues); that stretch reads SEQEDESEDTDTDGEEET. A compositionally biased stretch (pro residues) spans 172–192; the sequence is PPTPFIPFTSPLPLPPAPPGP. Acidic residues predominate over residues 196-205; it reads DAEDEEDYDS.

It belongs to the NC2 alpha/DRAP1 family. As to quaternary structure, heterodimer with DR1. Binds BTAF1. In terms of processing, phosphorylation reduces DNA binding, but has no effect on heterodimerization and TBP binding.

The protein resides in the nucleus. Functionally, the association of the DR1/DRAP1 heterodimer with TBP results in a functional repression of both activated and basal transcription of class II genes. This interaction precludes the formation of a transcription-competent complex by inhibiting the association of TFIIA and/or TFIIB with TBP. Can bind to DNA on its own. In Mus musculus (Mouse), this protein is Dr1-associated corepressor (Drap1).